Here is a 130-residue protein sequence, read N- to C-terminus: Gloverin (130 aa).

Hemolymph.

It localises to the secreted. Functionally, antibacterial protein active against Gram-negative bacteria. This is Gloverin from Hyalophora cecropia (Cecropia moth).